The following is a 159-amino-acid chain: Large ribosomal subunit protein uL15 (159 aa).

A compositionally biased stretch (basic and acidic residues) spans methionine 1–arginine 18. Positions methionine 1–lysine 39 are disordered. Positions arginine 21 to valine 35 are enriched in gly residues.

This sequence belongs to the universal ribosomal protein uL15 family. In terms of assembly, part of the 50S ribosomal subunit.

In terms of biological role, binds to the 23S rRNA. The chain is Large ribosomal subunit protein uL15 from Allorhizobium ampelinum (strain ATCC BAA-846 / DSM 112012 / S4) (Agrobacterium vitis (strain S4)).